The sequence spans 1656 residues: Probable phospholipid-transporting ATPase DNF3 (1656 aa).

The Lumenal portion of the chain corresponds to 1 to 164; the sequence is MGIADGQRRR…PRQLYAQFSK (164 aa). The interval 36–74 is disordered; it reads ELEDINESKTFSGSDNNDKDDRDETSGNYAAEEDYEMEE. Residues 51–60 show a composition bias toward basic and acidic residues; that stretch reads NNDKDDRDET. A helical transmembrane segment spans residues 165-185; sequence LANTYFFIVAVLQMIPGWSTT. Residues 186–451 lie on the Cytoplasmic side of the membrane; the sequence is GTYTTIIPLC…RTKAPKLQRK (266 aa). A helical transmembrane segment spans residues 452 to 472; that stretch reads INMIIVFMVFVVATISLFSYL. Residues 473 to 495 are Lumenal-facing; that stretch reads GHVLHKKKYIDQNKAWYLFQADA. The helical transmembrane segment at 496-516 threads the bilayer; sequence GVAPTIMSFIIMYNTVIPLSL. Over 517 to 1157 the chain is Cytoplasmic; the sequence is YVTMEIIKVV…ISKMNAVSQE (641 aa). Aspartate 566 (4-aspartylphosphate intermediate) is an active-site residue. ATP contacts are provided by aspartate 566, lysine 567, and threonine 568. Aspartate 566 lines the Mg(2+) pocket. Residue threonine 568 participates in Mg(2+) binding. Serine 627 carries the post-translational modification Phosphoserine. Residues glutamate 765, phenylalanine 813, serine 815, lysine 818, lysine 838, arginine 1034, threonine 1035, threonine 1114, glycine 1115, aspartate 1116, 1167–1174, arginine 1202, and lysine 1208 contribute to the ATP site; that span reads VVVIDGAT. Residues 1158–1178 form a helical membrane-spanning segment; it reads VDSGNIAHCVVVIDGATMAMF. Residues 1179–1318 are Lumenal-facing; it reads EGNPTYMSVF…MFSGSSLYEP (140 aa). Position 1229 (aspartate 1229) interacts with Mg(2+). 2 residues coordinate ATP: asparagine 1232 and aspartate 1233. A helical transmembrane segment spans residues 1319–1339; that stretch reads WSLSMFNTLFTSLPVLCIGMF. Residues 1340–1365 lie on the Cytoplasmic side of the membrane; that stretch reads EKDLKPMTLLTVPELYSYGRLSQGFN. A helical transmembrane segment spans residues 1366 to 1386; that stretch reads WLIFMEWVILATTNSLIITFL. Residues 1387 to 1395 are Lumenal-facing; that stretch reads NVVMWGMSS. A helical membrane pass occupies residues 1396 to 1416; that stretch reads LSDNTMYPLGLINFTAIVALI. The Cytoplasmic segment spans residues 1417–1432; that stretch reads NVKSQFVEMHNRNWLA. A helical membrane pass occupies residues 1433 to 1453; that stretch reads FTSVVLSCGGWLVWCCALPIL. Topologically, residues 1454-1473 are lumenal; sequence NNTDQIYDVAYGFYNHFGKD. The helical transmembrane segment at 1474–1494 threads the bilayer; sequence ITFWCTSLVLALLPITLDIVY. The Cytoplasmic portion of the chain corresponds to 1495 to 1656; sequence KTFKVMIWPS…IIQARLKDLE (162 aa). Residues 1554–1576 form a disordered region; it reads PRTNSRASAKTHNSSIYSMSNGN.

This sequence belongs to the cation transport ATPase (P-type) (TC 3.A.3) family. Type IV subfamily. As to quaternary structure, component of a flippase complex consisting of DNF3 and YNR048W/CRF1. Interacts with YNR048W/CRF1; the interaction is direct and required for proper expression and endoplasmic reticulum (ER) export of either partner. Mg(2+) is required as a cofactor.

It localises to the golgi apparatus. Its subcellular location is the trans-Golgi network membrane. It is found in the endosome membrane. The enzyme catalyses ATP + H2O + phospholipidSide 1 = ADP + phosphate + phospholipidSide 2.. The catalysed reaction is a 1,2-diacyl-sn-glycero-3-phosphocholine(out) + ATP + H2O = a 1,2-diacyl-sn-glycero-3-phosphocholine(in) + ADP + phosphate + H(+). It carries out the reaction a 1,2-diacyl-sn-glycero-3-phosphoethanolamine(out) + ATP + H2O = a 1,2-diacyl-sn-glycero-3-phosphoethanolamine(in) + ADP + phosphate + H(+). In terms of biological role, catalytic component of a P4-ATPase flippase complex which catalyzes the hydrolysis of ATP coupled to the transport of phosphatidylcholine and small amounts of phosphatidylethanolamine from the lumen to the cytosolic leaflet of the trans-Golgi network and ensures the maintenance of asymmetric distribution of phospholipids. May be involved in transport from early endosomes to the trans-Golgi network (TGN). The polypeptide is Probable phospholipid-transporting ATPase DNF3 (DNF3) (Saccharomyces cerevisiae (strain ATCC 204508 / S288c) (Baker's yeast)).